A 304-amino-acid polypeptide reads, in one-letter code: Insulin-like growth factor 1 receptor (304 aa).

2 Fibronectin type-III domains span residues 1-43 and 49-142; these read ERTV…TMPA and IPGP…VQAK. Topologically, residues 1-147 are extracellular; that stretch reads ERTVISNLRP…YVQAKTTYEN (147 aa). Asn115 and Asn128 each carry an N-linked (GlcNAc...) asparagine glycan. The helical transmembrane segment at 148–168 threads the bilayer; that stretch reads FIHLIIALPVAVLLIVGGLVI. Residues 169–304 lie on the Cytoplasmic side of the membrane; the sequence is MLYVFHRKRN…HMNGGRKNER (136 aa). Ser225 is subject to Phosphoserine; by GSK3-beta. Ser229 carries the post-translational modification Phosphoserine. Positions 231–304 are disordered; that stretch reads ENKPPEPEEL…HMNGGRKNER (74 aa). Residues 237–246 show a composition bias toward acidic residues; it reads PEELDLEPEN. Residues 247–263 are compositionally biased toward low complexity; that stretch reads MESVPLDPSASSSSLPL. A compositionally biased stretch (basic and acidic residues) spans 264–273; it reads PDRHSGHKAE.

Belongs to the protein kinase superfamily. Tyr protein kinase family. Insulin receptor subfamily. Tetramer of 2 alpha and 2 beta chains linked by disulfide bonds. The alpha chains contribute to the formation of the ligand-binding domain, while the beta chain carries the kinase domain. Forms a hybrid receptor with INSR, the hybrid is a tetramer consisting of 1 alpha chain and 1 beta chain of INSR and 1 alpha chain and 1 beta chain of IGF1R. Interacts with ARRB1 and ARRB2. Interacts with GRB10. Interacts with RACK1. Interacts with SOCS1, SOCS2 and SOCS3. Interacts with 14-3-3 proteins. Interacts with NMD2. Interacts with MAP3K5. Interacts with STAT3. Found in a ternary complex with IGF1 and ITGAV:ITGB3 or ITGA6:ITGB4. Interacts (nascent precursor form) with ZFAND2B. Post-translationally, autophosphorylated on tyrosine residues in response to ligand binding. Autophosphorylation occurs in trans, i.e. one subunit of the dimeric receptor phosphorylates tyrosine residues on the other subunit. Autophosphorylation occurs in a sequential manner. While every single phosphorylation increases kinase activity, all three tyrosine residues in the kinase activation loop have to be phosphorylated for optimal activity. Can be autophosphorylated at additional tyrosine residues (in vitro). May also be phosphorylated at tyrosine residues by mTORC2. Autophosphorylated is followed by phosphorylation of juxtamembrane tyrosines and C-terminal serines. Phosphorylation of Ser-225 by GSK-3beta restrains kinase activity and promotes cell surface expression, it requires a priming phosphorylation at Ser-229. Dephosphorylated by PTPN1. Polyubiquitinated in the activation loop through both 'Lys-48' and 'Lys-29' linkages, promoting receptor endocytosis and subsequent degradation by the proteasome. Ubiquitination is facilitated by pre-existing phosphorylation. In terms of processing, sumoylated with SUMO1. Post-translationally, controlled by regulated intramembrane proteolysis (RIP). Undergoes metalloprotease-dependent constitutive ectodomain shedding to produce a membrane-anchored 52 kDa C-Terminal fragment which is further processed by presenilin gamma-secretase to yield an intracellular 50 kDa fragment.

The protein resides in the cell membrane. The enzyme catalyses L-tyrosyl-[protein] + ATP = O-phospho-L-tyrosyl-[protein] + ADP + H(+). Its activity is regulated as follows. Activated by autophosphorylation at tyrosines in the kinase activation loop; phosphorylation at all three tyrosine residues is required for optimal kinase activity. Inhibited by MSC1609119A-1, BMS-754807, PQIP, benzimidazole pyridinone, isoquinolinedione, bis-azaindole, 3-cyanoquinoline, 2,4-bis-arylamino-1,3-pyrimidine, pyrrolopyrimidine, pyrrole-5-carboxaldehyde, picropodophyllin (PPP), tyrphostin derivatives. While most inhibitors bind to the ATP binding pocket, MSC1609119A-1 functions as allosteric inhibitor and binds close to the DFG motif and the activation loop. Functionally, receptor tyrosine kinase which mediates actions of insulin-like growth factor 1 (IGF1). Binds IGF1 with high affinity and IGF2 and insulin (INS) with a lower affinity. The activated IGF1R is involved in cell growth and survival control. IGF1R is crucial for tumor transformation and survival of malignant cell. Ligand binding activates the receptor kinase, leading to receptor autophosphorylation, and tyrosines phosphorylation of multiple substrates, that function as signaling adapter proteins including, the insulin-receptor substrates (IRS1/2), Shc and 14-3-3 proteins. Phosphorylation of IRSs proteins lead to the activation of two main signaling pathways: the PI3K-AKT/PKB pathway and the Ras-MAPK pathway. The result of activating the MAPK pathway is increased cellular proliferation, whereas activating the PI3K pathway inhibits apoptosis and stimulates protein synthesis. Phosphorylated IRS1 can activate the 85 kDa regulatory subunit of PI3K (PIK3R1), leading to activation of several downstream substrates, including protein AKT/PKB. AKT phosphorylation, in turn, enhances protein synthesis through mTOR activation and triggers the antiapoptotic effects of IGFIR through phosphorylation and inactivation of BAD. In parallel to PI3K-driven signaling, recruitment of Grb2/SOS by phosphorylated IRS1 or Shc leads to recruitment of Ras and activation of the ras-MAPK pathway. In addition to these two main signaling pathways IGF1R signals also through the Janus kinase/signal transducer and activator of transcription pathway (JAK/STAT). Phosphorylation of JAK proteins can lead to phosphorylation/activation of signal transducers and activators of transcription (STAT) proteins. In particular activation of STAT3, may be essential for the transforming activity of IGF1R. The JAK/STAT pathway activates gene transcription and may be responsible for the transforming activity. JNK kinases can also be activated by the IGF1R. IGF1 exerts inhibiting activities on JNK activation via phosphorylation and inhibition of MAP3K5/ASK1, which is able to directly associate with the IGF1R. When present in a hybrid receptor with INSR, binds IGF1. The protein is Insulin-like growth factor 1 receptor (IGF1R) of Sus scrofa (Pig).